The sequence spans 104 residues: L-rhamnose mutarotase (104 aa).

Tyr-18 contacts substrate. The Proton donor role is filled by His-22. Residues Tyr-41 and 76-77 each bind substrate; that span reads WW.

Belongs to the rhamnose mutarotase family. As to quaternary structure, homodimer.

The protein resides in the cytoplasm. The catalysed reaction is alpha-L-rhamnose = beta-L-rhamnose. It functions in the pathway carbohydrate metabolism; L-rhamnose metabolism. In terms of biological role, involved in the anomeric conversion of L-rhamnose. The sequence is that of L-rhamnose mutarotase from Acidiphilium cryptum (strain JF-5).